The primary structure comprises 707 residues: Ribosome biogenesis protein ENP2 (707 aa).

WD repeat units lie at residues 54–94 (EFSE…LKFD), 178–217 (LDTE…RVSK), 226–265 (NRPF…PSII), 269–310 (GYGF…AYAS), and 312–351 (EPSV…PSPR). Residues 523–707 (LTAAEESDEE…RASKNAFRGM (185 aa)) are disordered. The residue at position 529 (Ser529) is a Phosphoserine. Residues 532 to 544 (ERIAMKDGRGHYD) show a composition bias toward basic and acidic residues. Residues 545–558 (YEDEESDEEESDDE) are compositionally biased toward acidic residues. Phosphoserine is present on residues Ser550 and Ser555. 4 stretches are compositionally biased toward basic and acidic residues: residues 559-598 (TNQK…RFMN), 629-647 (ENGK…RGEA), 659-671 (KDGN…HDNS), and 680-697 (NGNK…ENRR).

It belongs to the WD repeat NOL10/ENP2 family. As to quaternary structure, component of the 90S pre-ribosomes.

Its subcellular location is the nucleus. The protein localises to the nucleolus. Its function is as follows. May be involved in rRNA-processing and ribosome biosynthesis. This Saccharomyces cerevisiae (strain ATCC 204508 / S288c) (Baker's yeast) protein is Ribosome biogenesis protein ENP2 (ENP2).